We begin with the raw amino-acid sequence, 319 residues long: MRVLIVKTSSMGDVLHTLPALTDAQQAIPGIKFDWVVEEGFAQIPSWHAAVERVIPVAIRRWRKAWFSAPIKAERKAFREALQAENYDAVIDAQGLVKSAALVTRLAHGVKHGMDWQTAREPLASLFYNRKHHIAKQQHAVERTRELFAKSLGYSKPQTQGDYAIAQHFLTNLPTDAGEYAVFLHATTRDDKHWPEEHWRELIGLLADSGIRIKLPWGAPHEEERAKRLAEGFAYVEVLPKMSLEGVARVLAGAKFVVSVDTGLSHLTAALDRPNITVYGPTDPGLIGGYGKNQMVCRAPRENLINLNSQAVLEKLSSL.

ADP-L-glycero-beta-D-manno-heptose-binding residues include Thr187, Thr188, Lys192, Glu222, Met242, Asp261, Thr262, Gly263, and His266.

It belongs to the glycosyltransferase 9 family.

Its subcellular location is the cell inner membrane. It catalyses the reaction an alpha-Kdo-(2-&gt;4)-alpha-Kdo-(2-&gt;6)-lipid A + ADP-L-glycero-beta-D-manno-heptose = an L-alpha-D-Hep-(1-&gt;5)-[alpha-Kdo-(2-&gt;4)]-alpha-Kdo-(2-&gt;6)-lipid A + ADP + H(+). It carries out the reaction alpha-Kdo-(2-&gt;4)-alpha-Kdo-(2-&gt;6)-lipid A (E. coli) + ADP-L-glycero-beta-D-manno-heptose = L-alpha-D-Hep-(1-&gt;5)-[alpha-Kdo-(2-&gt;4)]-alpha-Kdo-(2-&gt;6)-lipid A (E. coli) + ADP + H(+). The protein operates within bacterial outer membrane biogenesis; LPS core biosynthesis. In terms of biological role, glycosyltransferase involved in the biosynthesis of the core oligosaccharide region of lipopolysaccharide (LPS). Catalyzes the addition of the first heptose unit to one 3-deoxy-D-manno-octulosonic acid (Kdo) residue of the Kdo2-lipid A module. The analog ADP-mannose can serve as an alternative donor in place of ADP-L-glycero-D-manno-heptose for the glycosylation of Kdo2-lipid A. Displays no activity with ADP-glucose, GDP-mannose, UDP-glucose or UDP-galactose. In Escherichia coli (strain K12), this protein is Lipopolysaccharide heptosyltransferase 1.